The chain runs to 393 residues: S-adenosylmethionine synthase 4 (393 aa).

Mg(2+) is bound at residue E9. Position 15 (H15) interacts with ATP. Residue E43 participates in K(+) binding. L-methionine is bound by residues E56 and Q99. Residues 167–169 (DGK), 235–238 (SGRF), D246, 252–253 (RK), A269, K273, and K277 contribute to the ATP site. D246 provides a ligand contact to L-methionine. K277 serves as a coordination point for L-methionine.

The protein belongs to the AdoMet synthase family. As to quaternary structure, homotetramer. It depends on Mn(2+) as a cofactor. Requires Mg(2+) as cofactor. Co(2+) serves as cofactor. The cofactor is K(+). As to expression, detected in trichomes (at the protein level).

The protein resides in the cytoplasm. It catalyses the reaction L-methionine + ATP + H2O = S-adenosyl-L-methionine + phosphate + diphosphate. It participates in amino-acid biosynthesis; S-adenosyl-L-methionine biosynthesis; S-adenosyl-L-methionine from L-methionine: step 1/1. Functionally, catalyzes the formation of S-adenosylmethionine from methionine and ATP. The reaction comprises two steps that are both catalyzed by the same enzyme: formation of S-adenosylmethionine (AdoMet) and triphosphate, and subsequent hydrolysis of the triphosphate. This is S-adenosylmethionine synthase 4 (METK4) from Arabidopsis thaliana (Mouse-ear cress).